Reading from the N-terminus, the 377-residue chain is Putrescine transport ATP-binding protein PotG (377 aa).

In terms of domain architecture, ABC transporter spans 20–250 (LEIRNLTKSY…PTTRYSAEFI (231 aa)). Position 52–59 (52–59 (GASGCGKS)) interacts with ATP.

Belongs to the ABC transporter superfamily. The complex is composed of two ATP-binding proteins (PotG), two transmembrane proteins (PotH and PotI) and a solute-binding protein (PotF).

Its subcellular location is the cell inner membrane. It carries out the reaction putrescine(out) + ATP + H2O = putrescine(in) + ADP + phosphate + H(+). With respect to regulation, transport is feedback inhibited by intracellular polyamines. In terms of biological role, part of the ABC transporter complex PotFGHI involved in putrescine uptake. Responsible for energy coupling to the transport system. Imports putrescine for maintenance of the optimal concentration of polyamines necessary for cell growth in the presence of glucose. The chain is Putrescine transport ATP-binding protein PotG from Escherichia coli (strain K12).